We begin with the raw amino-acid sequence, 239 residues long: MKRVLLILVTGLFMSLCGITSSVSAQTGGSFFEPFNSYNSGLWQKADGYSNGDMFNCTWRANNVSMTSLGEMRLALTSPSYNKFDCGENRSVQTYGYGLYEVRMKPAKNTGIVSSFFTYTGPTEGTPWDEIDIEFLGKDTTKVQFNYYTNGAGNHEKFADLGFDAANAYHTYAFDWQPNSIKWYVDGQLKHTATTQIPAAPGKIMMNLWNGTGVDDWLGSYNGVNPIYAHYDWMRYRKK.

Positions 1-25 (MKRVLLILVTGLFMSLCGITSSVSA) are cleaved as a signal peptide. The region spanning 26–239 (QTGGSFFEPF…HYDWMRYRKK (214 aa)) is the GH16 domain. An intrachain disulfide couples Cys57 to Cys86. The Nucleophile role is filled by Glu134.

It belongs to the glycosyl hydrolase 16 family.

The catalysed reaction is Hydrolysis of (1-&gt;4)-beta-D-glucosidic linkages in beta-D-glucans containing (1-&gt;3)- and (1-&gt;4)-bonds.. This Bacillus amyloliquefaciens (Bacillus velezensis) protein is Beta-glucanase (bglA).